The chain runs to 169 residues: 6,7-dimethyl-8-ribityllumazine synthase (169 aa).

Residues tryptophan 27, 61–63 (SYE), and 90–92 (VLI) contribute to the 5-amino-6-(D-ribitylamino)uracil site. 95–96 (ST) is a (2S)-2-hydroxy-3-oxobutyl phosphate binding site. Residue histidine 98 is the Proton donor of the active site. Phenylalanine 123 contacts 5-amino-6-(D-ribitylamino)uracil. Arginine 137 is a (2S)-2-hydroxy-3-oxobutyl phosphate binding site.

The protein belongs to the DMRL synthase family. In terms of assembly, homopentamer.

The protein resides in the mitochondrion intermembrane space. The catalysed reaction is (2S)-2-hydroxy-3-oxobutyl phosphate + 5-amino-6-(D-ribitylamino)uracil = 6,7-dimethyl-8-(1-D-ribityl)lumazine + phosphate + 2 H2O + H(+). It functions in the pathway cofactor biosynthesis; riboflavin biosynthesis; riboflavin from 2-hydroxy-3-oxobutyl phosphate and 5-amino-6-(D-ribitylamino)uracil: step 1/2. Functionally, catalyzes the formation of 6,7-dimethyl-8-ribityllumazine by condensation of 5-amino-6-(D-ribitylamino)uracil with 3,4-dihydroxy-2-butanone 4-phosphate. This is the penultimate step in the biosynthesis of riboflavin. This Saccharomyces cerevisiae (strain ATCC 204508 / S288c) (Baker's yeast) protein is 6,7-dimethyl-8-ribityllumazine synthase (RIB4).